The sequence spans 989 residues: Frequency clock protein (989 aa).

3 disordered regions span residues 1–139 (MADS…PGFR), 208–290 (FAAS…VGTQ), and 331–445 (ISGR…PDRV). Residues 36-45 (ENHRLARDTS) are compositionally biased toward basic and acidic residues. A compositionally biased stretch (polar residues) spans 46–88 (SRVTSSSALGVTESQPQLKSSPTRRNSSGESEPTNWFNQSNRN). Positions 109-119 (KETDSSNEESR) are enriched in basic and acidic residues. Residues 233-255 (HSSGVSLSKHDSSSSSRSRPVDS) are compositionally biased toward low complexity. Polar residues-rich tracts occupy residues 256 to 274 (AYNS…SSGP) and 334 to 343 (RNMQRNQSMP). Residues 377-386 (DNPRKNRSSK) show a composition bias toward basic and acidic residues. Polar residues predominate over residues 387–397 (DNGSASNSGGD). Gly residues predominate over residues 402-418 (GGTGTGSGDGSGSGGRT). The span at 433–444 (RPTRPRDLDPDR) shows a compositional bias: basic and acidic residues. Thr501 carries the post-translational modification Phosphothreonine. A phosphoserine mark is found at Ser513 and Ser519. Disordered stretches follow at residues 524-642 (KIRW…QRRK), 865-907 (WDDG…TYMR), and 968-989 (SVAT…VSSS). A Nuclear localization signal motif is present at residues 564 to 568 (RKKRK). Polar residues predominate over residues 598-615 (RNSSSIETSLEESMSQGS). Residues 865–886 (WDDGDDLASDDEEVEEVEEDSY) are compositionally biased toward acidic residues. Residues 978–989 (GYSSSMEDVSSS) show a composition bias toward polar residues.

This sequence belongs to the FRQ family. Progressive phosphorylation during the late circadian day and early night. Phosphorylation is also involved in regulating frq degradation. Phosphorylation by CKII may have at least three functions; it decreases the stability of frq, reduces the protein complex formation between frq and the white collar proteins, and is important for the closing of the Neurospora circadian negative feedback loop.

The protein localises to the nucleus. In terms of biological role, circadian clock component involved in the generation of biological rhythms, in particular in rhythm stability, period length, and temperature compensation. Oscillates in abundance with a daily peak early in the morning. Behaves as a negative element in circadian transcriptional loop. May bind to wc-2 protein. The complex frq-wc-2 may turn off the expression of frq. This Neurospora crassa (strain ATCC 24698 / 74-OR23-1A / CBS 708.71 / DSM 1257 / FGSC 987) protein is Frequency clock protein (frq).